Here is a 103-residue protein sequence, read N- to C-terminus: Large ribosomal subunit protein bL21 (103 aa).

Belongs to the bacterial ribosomal protein bL21 family. In terms of assembly, part of the 50S ribosomal subunit. Contacts protein L20.

In terms of biological role, this protein binds to 23S rRNA in the presence of protein L20. This chain is Large ribosomal subunit protein bL21, found in Acidovorax sp. (strain JS42).